Reading from the N-terminus, the 178-residue chain is Large ribosomal subunit protein uL6 (178 aa).

This sequence belongs to the universal ribosomal protein uL6 family. Part of the 50S ribosomal subunit.

Its function is as follows. This protein binds to the 23S rRNA, and is important in its secondary structure. It is located near the subunit interface in the base of the L7/L12 stalk, and near the tRNA binding site of the peptidyltransferase center. The protein is Large ribosomal subunit protein uL6 of Streptococcus suis (strain 05ZYH33).